The sequence spans 320 residues: ATP synthase gamma chain (320 aa).

The protein belongs to the ATPase gamma chain family. As to quaternary structure, F-type ATPases have 2 components, CF(1) - the catalytic core - and CF(0) - the membrane proton channel. CF(1) has five subunits: alpha(3), beta(3), gamma(1), delta(1), epsilon(1). CF(0) has three main subunits: a, b and c.

The protein resides in the cell membrane. Produces ATP from ADP in the presence of a proton gradient across the membrane. The gamma chain is believed to be important in regulating ATPase activity and the flow of protons through the CF(0) complex. In Lactobacillus delbrueckii subsp. bulgaricus (strain ATCC 11842 / DSM 20081 / BCRC 10696 / JCM 1002 / NBRC 13953 / NCIMB 11778 / NCTC 12712 / WDCM 00102 / Lb 14), this protein is ATP synthase gamma chain.